The sequence spans 570 residues: Urease subunit alpha (570 aa).

The Urease domain maps to G131–F570. The Ni(2+) site is built by H136, H138, and K219. At K219 the chain carries N6-carboxylysine. H221 contacts substrate. Ni(2+) is bound by residues H248 and H274. H322 acts as the Proton donor in catalysis. Position 362 (D362) interacts with Ni(2+).

The protein belongs to the metallo-dependent hydrolases superfamily. Urease alpha subunit family. Heterotrimer of UreA (gamma), UreB (beta) and UreC (alpha) subunits. Three heterotrimers associate to form the active enzyme. The cofactor is Ni cation. Post-translationally, carboxylation allows a single lysine to coordinate two nickel ions.

Its subcellular location is the cytoplasm. It carries out the reaction urea + 2 H2O + H(+) = hydrogencarbonate + 2 NH4(+). The protein operates within nitrogen metabolism; urea degradation; CO(2) and NH(3) from urea (urease route): step 1/1. The sequence is that of Urease subunit alpha from Rhizobium meliloti (strain 1021) (Ensifer meliloti).